The following is a 558-amino-acid chain: Glucose-6-phosphate isomerase (558 aa).

Ala-2 carries the N-acetylalanine modification. The residue at position 12 (Lys-12) is an N6-acetyllysine. At Lys-34 the chain carries N6-(2-hydroxyisobutyryl)lysine. Ser-107 carries the phosphoserine modification. Thr-109 bears the Phosphothreonine mark. Lys-142 bears the N6-acetyllysine mark. 159 to 160 (GS) contributes to the D-glucose 6-phosphate binding site. Residue Ser-185 is modified to Phosphoserine; by CK2. 210 to 215 (SKTFTT) serves as a coordination point for D-glucose 6-phosphate. Position 250 is a phosphothreonine (Thr-250). D-glucose 6-phosphate is bound by residues Gln-354, Glu-358, and His-389. Glu-358 (proton donor) is an active-site residue. Residue His-389 is part of the active site. Residue Lys-454 is modified to N6-acetyllysine; alternate. N6-malonyllysine; alternate is present on Lys-454. At Lys-454 the chain carries N6-succinyllysine; alternate. Ser-455 is subject to Phosphoserine. Lys-519 contacts D-glucose 6-phosphate. The active site involves Lys-519.

It belongs to the GPI family. As to quaternary structure, homodimer; in the catalytically active form. Monomer in the secreted form. Post-translationally, phosphorylation at Ser-185 by CK2 has been shown to decrease enzymatic activity and may contribute to secretion by a non-classical secretory pathway. In terms of processing, ISGylated.

It localises to the cytoplasm. Its subcellular location is the secreted. The enzyme catalyses alpha-D-glucose 6-phosphate = beta-D-fructose 6-phosphate. The protein operates within carbohydrate degradation; glycolysis; D-glyceraldehyde 3-phosphate and glycerone phosphate from D-glucose: step 2/4. Its function is as follows. In the cytoplasm, catalyzes the conversion of glucose-6-phosphate to fructose-6-phosphate, the second step in glycolysis, and the reverse reaction during gluconeogenesis. Besides it's role as a glycolytic enzyme, also acts as a secreted cytokine: acts as an angiogenic factor (AMF) that stimulates endothelial cell motility. Acts as a neurotrophic factor, neuroleukin, for spinal and sensory neurons. It is secreted by lectin-stimulated T-cells and induces immunoglobulin secretion. The polypeptide is Glucose-6-phosphate isomerase (Macaca fascicularis (Crab-eating macaque)).